A 98-amino-acid polypeptide reads, in one-letter code: U1-theraphotoxin-Ap1a (98 aa).

The signal sequence occupies residues 1-23 (MRSLTLAAVLACSLLLVFHTSAA). The propeptide occupies 24-50 (EELEVQDGHLMNPGDGDTALATVDDER). Intrachain disulfides connect C54–C84, C58–C90, and C72–C95. Residues 63-84 (DGKSKEGKPCKPKGDKNKDKKC) are disordered.

Belongs to the neurotoxin 12 (Hwtx-2) family. 01 (Ap1a) subfamily. Expressed by the venom gland.

The protein localises to the secreted. Functionally, is toxic to both insects and mammals. Induces reversible paralysis when injected into S.frugiperda larvae. Reduces both the amplitude and frequency of responses from muscle (GF-TTM and GF-DLM) pathways in the D.melanogaster giant fiber circuit, suggesting an action at the neuromuscular junction, which is mediated by glutamatergic receptors. In mice, intracranial injection of 30 ug causes increased urination, myoclonus, hypermotility with circular movements followed by respiratory and generalized seizures resulting in death within 25-35 minutes of injection. This chain is U1-theraphotoxin-Ap1a, found in Acanthoscurria paulensis (Brazilian giant black tarantula spider).